The following is a 1849-amino-acid chain: Protein TANC1 (1849 aa).

N-acetylmethionine is present on Met-1. Disordered regions lie at residues 1 to 47 (MLKA…TTED) and 59 to 109 (MSLP…FREG). Basic and acidic residues predominate over residues 8–21 (KSREGVKGSKKEAG). Residues 27–46 (ETPTLSSSGDSPVNSLSTTE) show a composition bias toward polar residues. Phosphoserine is present on residues Ser-60, Ser-63, Ser-64, Ser-204, Ser-267, and Ser-455. 2 disordered regions span residues 264-309 (DNCS…PRPN) and 430-481 (VASS…QRPR). The segment covering 451–468 (TPLLSPSSSTSALSAART) has biased composition (low complexity). 11 ANK repeats span residues 886–918 (EGLSAALASLRNLYTPNVKVSRLLILGGANVNY), 924–953 (NNAPILCVQSHLGHEEVVTLLLEFGACLDG), 957–986 (NGMNALCYAAAAGHMKLVCLLTKKGARVDH), 990–1019 (KGQCALVHSALRGHSDILQYLLNCEWSAGP), 1030–1059 (ALQQALTAAASMGHSAVVQSLLGMAEEHEI), 1068–1097 (WGETALTAAAGRGKLEICELLLERGAAVSR), 1101–1130 (RGVPPLFCAARQGHWQVVQLLLDRGCDVNP), 1134–1163 (QGRTPLMVAACEGHLSTVEFLLSKGAALSS), 1167–1196 (EGLSALSWACLKGHRAVVQYLVEEGAEIDQ), 1200–1229 (NGRTPLDLAAFYGDAETVLYLVEKGAVIEH), and 1233–1262 (SGMRPLDRAIGCRNTAVVVTLLRKGAKLGN). TPR repeat units follow at residues 1279 to 1312 (LQKLMEEGNVMYKKGKMKEAAQRYQYALRKFPRE), 1326 to 1359 (VSLYLNLSRCRRKTNDFGLAEEFASKALELKPKS), and 1361 to 1393 (EAFYARARAKRNSRQFLAALADLQEAVKLCPTN). Low complexity predominate over residues 1410 to 1421 (LQRNQQQKQQAP). Disordered regions lie at residues 1410–1503 (LQRN…ISKS), 1527–1605 (NQHL…GESG), 1635–1711 (QGGP…PRNT), and 1812–1849 (PHLYPEGVSKQPLHVSTEAHRSHLTSAKPKRSFIESNV). Phosphoserine is present on residues Ser-1429 and Ser-1456. The span at 1447–1456 (EEAEEEDTSS) shows a compositional bias: acidic residues. 2 stretches are compositionally biased toward polar residues: residues 1527–1546 (NQHLGSGQSSMRNSNTKVQV) and 1593–1603 (PSQSLQLQRGE). A compositionally biased stretch (low complexity) spans 1649 to 1679 (SLSSSGSSGSPSSSVKMSSSTSSLTSSSSVS). Phosphoserine is present on residues Ser-1658, Ser-1666, and Ser-1667.

The protein belongs to the TANC family. In terms of assembly, interacts probably directly with DLG1, DLG4, HOMER1. Interacts with DLGAP1, INA, CAMK2A, GRIN2B and GRIA1. Interacts with TNIK and MINK1. Post-translationally, phosphorylated; by MINK1 and TNIK upon stimulation by RAP2A. In terms of tissue distribution, expressed in heart, lung, liver and kidney. Expressed in brain (at protein level).

Its subcellular location is the postsynaptic density. In terms of biological role, may be a scaffold component in the postsynaptic density. This is Protein TANC1 (Tanc1) from Rattus norvegicus (Rat).